Here is a 90-residue protein sequence, read N- to C-terminus: Neuropeptide-like 3 (90 aa).

Residues 1 to 16 form the signal peptide; it reads MFKLCVFVALLSLAAA. Propeptides lie at residues 17 to 54 and 67 to 79; these read APAP…LAPQ and AITQ…LLIK. I89 is subject to Isoleucine amide.

It is found in the secreted. The sequence is that of Neuropeptide-like 3 (Nplp3) from Drosophila melanogaster (Fruit fly).